The sequence spans 260 residues: UPF0246 protein BPSL1241 (260 aa).

The protein belongs to the UPF0246 family.

This chain is UPF0246 protein BPSL1241, found in Burkholderia pseudomallei (strain K96243).